We begin with the raw amino-acid sequence, 242 residues long: Biosynthetic peptidoglycan transglycosylase (242 aa).

Residues 19 to 39 (LMVVLAVFWGGGIALFSVAPV) form a helical membrane-spanning segment.

This sequence belongs to the glycosyltransferase 51 family.

It is found in the cell inner membrane. The catalysed reaction is [GlcNAc-(1-&gt;4)-Mur2Ac(oyl-L-Ala-gamma-D-Glu-L-Lys-D-Ala-D-Ala)](n)-di-trans,octa-cis-undecaprenyl diphosphate + beta-D-GlcNAc-(1-&gt;4)-Mur2Ac(oyl-L-Ala-gamma-D-Glu-L-Lys-D-Ala-D-Ala)-di-trans,octa-cis-undecaprenyl diphosphate = [GlcNAc-(1-&gt;4)-Mur2Ac(oyl-L-Ala-gamma-D-Glu-L-Lys-D-Ala-D-Ala)](n+1)-di-trans,octa-cis-undecaprenyl diphosphate + di-trans,octa-cis-undecaprenyl diphosphate + H(+). It functions in the pathway cell wall biogenesis; peptidoglycan biosynthesis. Functionally, peptidoglycan polymerase that catalyzes glycan chain elongation from lipid-linked precursors. The polypeptide is Biosynthetic peptidoglycan transglycosylase (Escherichia coli (strain SMS-3-5 / SECEC)).